The sequence spans 507 residues: ATP synthase subunit alpha, chloroplastic (507 aa).

170–177 lines the ATP pocket; sequence GDRQTGKT.

The protein belongs to the ATPase alpha/beta chains family. F-type ATPases have 2 components, CF(1) - the catalytic core - and CF(0) - the membrane proton channel. CF(1) has five subunits: alpha(3), beta(3), gamma(1), delta(1), epsilon(1). CF(0) has four main subunits: a, b, b' and c.

It is found in the plastid. Its subcellular location is the chloroplast thylakoid membrane. It carries out the reaction ATP + H2O + 4 H(+)(in) = ADP + phosphate + 5 H(+)(out). Functionally, produces ATP from ADP in the presence of a proton gradient across the membrane. The alpha chain is a regulatory subunit. This is ATP synthase subunit alpha, chloroplastic from Drimys granadensis.